The sequence spans 272 residues: Nitrogenase iron protein (272 aa).

ATP is bound at residue glycine 8–serine 15. Residue cysteine 94 coordinates [4Fe-4S] cluster. ADP-ribosylarginine; by dinitrogenase reductase ADP-ribosyltransferase is present on arginine 97. Position 129 (cysteine 129) interacts with [4Fe-4S] cluster.

The protein belongs to the NifH/BchL/ChlL family. In terms of assembly, homodimer. [4Fe-4S] cluster is required as a cofactor. In terms of processing, the reversible ADP-ribosylation of Arg-97 inactivates the nitrogenase reductase and regulates nitrogenase activity.

It catalyses the reaction N2 + 8 reduced [2Fe-2S]-[ferredoxin] + 16 ATP + 16 H2O = H2 + 8 oxidized [2Fe-2S]-[ferredoxin] + 2 NH4(+) + 16 ADP + 16 phosphate + 6 H(+). The key enzymatic reactions in nitrogen fixation are catalyzed by the nitrogenase complex, which has 2 components: the iron protein and the molybdenum-iron protein. This is Nitrogenase iron protein from Desulforamulus reducens (strain ATCC BAA-1160 / DSM 100696 / MI-1) (Desulfotomaculum reducens).